A 120-amino-acid chain; its full sequence is ATP-dependent Clp protease adapter protein ClpS (120 aa).

Residues 1-27 (MHAPSEIRLTFNQDRPQSNEDDGSGLA) are disordered.

The protein belongs to the ClpS family. As to quaternary structure, binds to the N-terminal domain of the chaperone ClpA.

In terms of biological role, involved in the modulation of the specificity of the ClpAP-mediated ATP-dependent protein degradation. The protein is ATP-dependent Clp protease adapter protein ClpS of Pseudomonas putida (strain GB-1).